The sequence spans 152 residues: Transcriptional regulator MraZ (152 aa).

SpoVT-AbrB domains are found at residues 5–52 (ASAI…PIHE) and 81–124 (AHEV…DEQS).

The protein belongs to the MraZ family. As to quaternary structure, forms oligomers.

It localises to the cytoplasm. Its subcellular location is the nucleoid. This is Transcriptional regulator MraZ from Shewanella baltica (strain OS195).